A 399-amino-acid chain; its full sequence is DNA primase DnaG (399 aa).

The 87-residue stretch at 182–268 folds into the Toprim domain; sequence DAIIVVEGRA…EVEDLTQKEI (87 aa). Mg(2+) is bound by residues glutamate 188, aspartate 230, and aspartate 232.

The protein belongs to the archaeal DnaG primase family. In terms of assembly, forms a ternary complex with MCM helicase and DNA. Component of the archaeal exosome complex. It depends on Mg(2+) as a cofactor.

The catalysed reaction is ssDNA + n NTP = ssDNA/pppN(pN)n-1 hybrid + (n-1) diphosphate.. RNA polymerase that catalyzes the synthesis of short RNA molecules used as primers for DNA polymerase during DNA replication. Also part of the exosome, which is a complex involved in RNA degradation. Acts as a poly(A)-binding protein that enhances the interaction between heteromeric, adenine-rich transcripts and the exosome. This chain is DNA primase DnaG, found in Archaeoglobus fulgidus (strain ATCC 49558 / DSM 4304 / JCM 9628 / NBRC 100126 / VC-16).